Reading from the N-terminus, the 72-residue chain is Translation initiation factor IF-1 (72 aa).

Positions 1–72 constitute an S1-like domain; sequence MSKQTAIEQD…TKGRISFRYK (72 aa).

The protein belongs to the IF-1 family. As to quaternary structure, component of the 30S ribosomal translation pre-initiation complex which assembles on the 30S ribosome in the order IF-2 and IF-3, IF-1 and N-formylmethionyl-tRNA(fMet); mRNA recruitment can occur at any time during PIC assembly.

It localises to the cytoplasm. One of the essential components for the initiation of protein synthesis. Stabilizes the binding of IF-2 and IF-3 on the 30S subunit to which N-formylmethionyl-tRNA(fMet) subsequently binds. Helps modulate mRNA selection, yielding the 30S pre-initiation complex (PIC). Upon addition of the 50S ribosomal subunit IF-1, IF-2 and IF-3 are released leaving the mature 70S translation initiation complex. This chain is Translation initiation factor IF-1, found in Porphyromonas gingivalis (strain ATCC BAA-308 / W83).